Reading from the N-terminus, the 570-residue chain is PTS system lactose-specific EIICB component (570 aa).

Positions 9–410 (IEKGKPFFEK…VVDIIIYYPF (402 aa)) constitute a PTS EIIC type-3 domain. 9 helical membrane-spanning segments follow: residues 31–51 (GFIS…IAYV), 65–85 (AILM…VAGT), 104–124 (INFI…ASDP), 133–153 (AFMG…TVIV), 178–198 (FKDL…DLVI), 223–243 (GWIG…VGIH), 283–303 (MFIV…MFMW), 340–360 (VFFI…KLFV), and 382–402 (IIMG…LIVV). The PTS EIIB type-3 domain maps to 467-570 (QTNVLVLCAG…LDFVQQQFEN (104 aa)). The Phosphocysteine intermediate; for EIIB activity role is filled by C474. At C474 the chain carries Phosphocysteine; by EIIA.

Its subcellular location is the cell membrane. The catalysed reaction is lactose(out) + N(pros)-phospho-L-histidyl-[protein] = lactose 6-phosphate(in) + L-histidyl-[protein]. The phosphoenolpyruvate-dependent sugar phosphotransferase system (sugar PTS), a major carbohydrate active transport system, catalyzes the phosphorylation of incoming sugar substrates concomitantly with their translocation across the cell membrane. The enzyme II LacEF PTS system is involved in lactose transport. In Staphylococcus aureus (strain N315), this protein is PTS system lactose-specific EIICB component.